Reading from the N-terminus, the 749-residue chain is Amyloid-beta A4 precursor protein-binding family A member 2 (749 aa).

Disordered regions lie at residues 1–94, 130–220, and 238–344; these read MAHR…PEEE, DTDE…GDLE, and SMTS…NIPE. Position 11 is a phosphoserine (Ser11). Over residues 70–80 the composition is skewed to polar residues; the sequence is GDSSSDYVNNT. Acidic residues-rich tracts occupy residues 81 to 94 and 131 to 142; these read SEEEDYDEGLPEEE and TDECQEAVEEWT. The interval 185-270 is STXBP1-binding; sequence HYCASKEGYQ…SVEACPPIKA (86 aa). The residue at position 208 (Ser208) is a Phosphoserine. A compositionally biased stretch (polar residues) spans 238-247; it reads SMTSITSASE. The span at 305–315 shows a compositional bias: basic and acidic residues; sequence RTPEERLKWPH. The 188-residue stretch at 368 to 555 folds into the PID domain; that stretch reads DGIIFAANYL…IINTQEMYND (188 aa). PDZ domains lie at 568–654 and 659–734; these read ELQL…IVSC and TVLI…TMPA.

Part of a multimeric complex containing STXBP1 and syntaxin-1. Binds to the cytoplasmic domain of amyloid-beta protein, and to the nuclear factor NF-kappa-B/p65 via its PDZ domain. Interacts with the N-terminal domain of NECAB3. Brain.

Putative function in synaptic vesicle exocytosis by binding to STXBP1, an essential component of the synaptic vesicle exocytotic machinery. May modulate processing of the amyloid-beta precursor protein (APP) and hence formation of APP-beta. The polypeptide is Amyloid-beta A4 precursor protein-binding family A member 2 (APBA2) (Homo sapiens (Human)).